A 334-amino-acid polypeptide reads, in one-letter code: MNRNHHDHLDAAGKDMWSRLSDLADKADMLYEREGISKDRKSVSEEEEEKKTRFSILVDLVGRLCDQEERRTLGSSPTKTNTLFEGSEKSHLDHHLDHLPQKPRSSLECFFTRVYTRRNHNNVSTSSSLFNTDEFERTETKSPTIRNSQSSPSSCLMENTKRKRYQSSGKSKKPKFDPFSLTAARETPEWLLDVMRKMKGAEGPIKLIYEKTLTATDVKPSESRLLIPFNKLLRNDFLTPEESRAIAIDKEEEEEDTKKIGVKTIIVNQFSKEWSLRFLIWVMKKKKSGNGTLYYTLNRGWNGVVSGNKLKANDNISLWTFRCGGVLCFALEKE.

Disordered regions lie at residues 69-89 (ERRT…GSEK) and 133-178 (DEFE…KFDP). Polar residues-rich tracts occupy residues 73-84 (LGSSPTKTNTLF) and 141-157 (KSPT…SCLM). Residues 161–173 (KRKRYQSSGKSKK) show a composition bias toward basic residues. Residues 229–334 (FNKLLRNDFL…GVLCFALEKE (106 aa)) constitute a DNA-binding region (TF-B3).

It localises to the nucleus. The sequence is that of Putative B3 domain-containing protein At3g49610 from Arabidopsis thaliana (Mouse-ear cress).